Here is a 501-residue protein sequence, read N- to C-terminus: UDP-N-acetylmuramate--L-alanine ligase (501 aa).

130–136 (GTHGKTS) contributes to the ATP binding site.

The protein belongs to the MurCDEF family.

It localises to the cytoplasm. The enzyme catalyses UDP-N-acetyl-alpha-D-muramate + L-alanine + ATP = UDP-N-acetyl-alpha-D-muramoyl-L-alanine + ADP + phosphate + H(+). It participates in cell wall biogenesis; peptidoglycan biosynthesis. Cell wall formation. This chain is UDP-N-acetylmuramate--L-alanine ligase, found in Nocardia farcinica (strain IFM 10152).